The following is a 343-amino-acid chain: Hydroxymethylglutaryl-CoA synthase (343 aa).

Residues aspartate 28 and alanine 29 each coordinate (3S)-3-hydroxy-3-methylglutaryl-CoA. The active-site Proton donor/acceptor is the glutamate 80. A (3S)-3-hydroxy-3-methylglutaryl-CoA-binding site is contributed by cysteine 112. Cysteine 112 acts as the Acyl-thioester intermediate in catalysis. Position 198 (arginine 198) interacts with CoA. (3S)-3-hydroxy-3-methylglutaryl-CoA is bound by residues threonine 200 and histidine 233. Histidine 233 acts as the Proton donor/acceptor in catalysis. Residue lysine 238 participates in CoA binding. (3S)-3-hydroxy-3-methylglutaryl-CoA contacts are provided by arginine 242, asparagine 265, and serine 295.

This sequence belongs to the thiolase-like superfamily. Archaeal HMG-CoA synthase family. Interacts with acetoacetyl-CoA thiolase that catalyzes the precedent step in the pathway and with a DUF35 protein. The acetoacetyl-CoA thiolase/HMG-CoA synthase complex channels the intermediate via a fused CoA-binding site, which allows for efficient coupling of the endergonic thiolase reaction with the exergonic HMGCS reaction.

The enzyme catalyses acetoacetyl-CoA + acetyl-CoA + H2O = (3S)-3-hydroxy-3-methylglutaryl-CoA + CoA + H(+). The protein operates within metabolic intermediate biosynthesis; (R)-mevalonate biosynthesis; (R)-mevalonate from acetyl-CoA: step 2/3. Functionally, catalyzes the condensation of acetyl-CoA with acetoacetyl-CoA to form 3-hydroxy-3-methylglutaryl-CoA (HMG-CoA). Functions in the mevalonate (MVA) pathway leading to isopentenyl diphosphate (IPP), a key precursor for the biosynthesis of isoprenoid compounds that are building blocks of archaeal membrane lipids. The protein is Hydroxymethylglutaryl-CoA synthase of Archaeoglobus fulgidus (strain ATCC 49558 / DSM 4304 / JCM 9628 / NBRC 100126 / VC-16).